Consider the following 232-residue polypeptide: Putative N-acetylmannosamine-6-phosphate 2-epimerase (232 aa).

This sequence belongs to the NanE family.

It catalyses the reaction an N-acyl-D-glucosamine 6-phosphate = an N-acyl-D-mannosamine 6-phosphate. Its pathway is amino-sugar metabolism; N-acetylneuraminate degradation; D-fructose 6-phosphate from N-acetylneuraminate: step 3/5. Functionally, converts N-acetylmannosamine-6-phosphate (ManNAc-6-P) to N-acetylglucosamine-6-phosphate (GlcNAc-6-P). This is Putative N-acetylmannosamine-6-phosphate 2-epimerase from Corynebacterium glutamicum (strain R).